Here is a 262-residue protein sequence, read N- to C-terminus: Phosphatidylglycerol--prolipoprotein diacylglyceryl transferase (262 aa).

A run of 4 helical transmembrane segments spans residues 9–29 (LGPLAIRWYALCIVTGLILAV), 41–61 (IIPDDILDFILVAFPLAILGA), 80–100 (IFAIWNGGLAIYGGLITGALV), and 109–129 (LINTWDFLDIAAPSVMIAQSL). Arg-131 contacts a 1,2-diacyl-sn-glycero-3-phospho-(1'-sn-glycerol). Helical transmembrane passes span 167 to 187 (QPTFLYESLWNLLGFALILIF), 197 to 217 (GHITAFYLIWYGFGRMVIEGM), and 226 to 246 (GLRVSQWLSVVFIGLGIMIVI).

Belongs to the Lgt family.

It localises to the cell membrane. It catalyses the reaction L-cysteinyl-[prolipoprotein] + a 1,2-diacyl-sn-glycero-3-phospho-(1'-sn-glycerol) = an S-1,2-diacyl-sn-glyceryl-L-cysteinyl-[prolipoprotein] + sn-glycerol 1-phosphate + H(+). The protein operates within protein modification; lipoprotein biosynthesis (diacylglyceryl transfer). Its function is as follows. Catalyzes the transfer of the diacylglyceryl group from phosphatidylglycerol to the sulfhydryl group of the N-terminal cysteine of a prolipoprotein, the first step in the formation of mature lipoproteins. This is Phosphatidylglycerol--prolipoprotein diacylglyceryl transferase from Streptococcus pneumoniae (strain Taiwan19F-14).